A 410-amino-acid polypeptide reads, in one-letter code: Transcription termination factor, mitochondrial (410 aa).

The transit peptide at 1-44 (MIRSLLRSFETALKLHAGLNMHPMHCSRRLLFSQYENRASPSRL) directs the protein to the mitochondrion.

The protein belongs to the mTERF family.

It is found in the mitochondrion. Its function is as follows. Transcription termination factor. Binds promoter DNA and regulates mitochondrial replication and transcription. Transcription termination activity may be polarized with highest termination activity occurring when its DNA-binding site is positioned in the reverse orientation with respect to the incoming RNA polymerase. Required for normal topology and maintenance of mitochondrial DNA (mtDNA) levels. Regulates mtDNA replication by promoting replication pausing, possibly by acting as a natural barrier to replication fork progression. Its function in replication pausing prevents unregulated replication that may occur for example by collisions between the machineries of DNA replication and transcription during mtDNA synthesis. This ensures the incorporation of RNA transcripts into replication intermediates at the replication fork and allow for proper fork progression. Shares mtDNA binding sites with the mitochondrial termination factor mTerf5 and thereby may antagonize mTerf5 function during replication to regulate pausing. Likely to function downstream of Dref which activates genes involved in mtDNA replication and maintenance. This is Transcription termination factor, mitochondrial from Drosophila melanogaster (Fruit fly).